Reading from the N-terminus, the 141-residue chain is HTH-type transcriptional repressor NsrR (141 aa).

The 128-residue stretch at glutamine 2–threonine 129 folds into the HTH rrf2-type domain. The H-T-H motif DNA-binding region spans isoleucine 28–glutamine 51. Residues cysteine 91, cysteine 96, and cysteine 102 each contribute to the [2Fe-2S] cluster site.

[2Fe-2S] cluster serves as cofactor.

Nitric oxide-sensitive repressor of genes involved in protecting the cell against nitrosative stress. May require iron for activity. This Aliivibrio salmonicida (strain LFI1238) (Vibrio salmonicida (strain LFI1238)) protein is HTH-type transcriptional repressor NsrR.